A 40-amino-acid chain; its full sequence is Dolichyl-diphosphooligosaccharide--protein glycosyltransferase subunit 4 (40 aa).

Residues methionine 1–aspartate 4 are Lumenal-facing. The chain crosses the membrane as a helical span at residues valine 5–tyrosine 25. At histidine 26–lysine 40 the chain is on the cytoplasmic side.

It belongs to the OST4 family. Component of the oligosaccharyltransferase (OST) complex.

It is found in the endoplasmic reticulum membrane. Its function is as follows. Subunit of the oligosaccharyl transferase (OST) complex that catalyzes the initial transfer of a defined glycan (Glc(3)Man(9)GlcNAc(2) in eukaryotes) from the lipid carrier dolichol-pyrophosphate to an asparagine residue within an Asn-X-Ser/Thr consensus motif in nascent polypeptide chains, the first step in protein N-glycosylation. N-glycosylation occurs cotranslationally and the complex associates with the Sec61 complex at the channel-forming translocon complex that mediates protein translocation across the endoplasmic reticulum (ER). All subunits are required for a maximal enzyme activity. The polypeptide is Dolichyl-diphosphooligosaccharide--protein glycosyltransferase subunit 4 (Drosophila yakuba (Fruit fly)).